A 693-amino-acid polypeptide reads, in one-letter code: Protein-glutamine gamma-glutamyltransferase E (693 aa).

Tyrosine 111 carries the phosphotyrosine modification. Threonine 112 is modified (phosphothreonine). Positions 222, 225, 227, 228, and 230 each coordinate Ca(2+). Cysteine 273 is an active-site residue. Positions 302, 304, 306, 308, and 325 each coordinate Ca(2+). Residues histidine 331 and aspartate 354 contribute to the active site. Ca(2+)-binding residues include asparagine 394, threonine 416, glutamate 444, and glutamate 449. The disordered stretch occupies residues 457–483; it reads LDKLKPNASFGATSSRNPEGEDKEPSI.

This sequence belongs to the transglutaminase superfamily. Transglutaminase family. In terms of assembly, consists of two polypeptide chains, which are synthesized as a precursor form of a single polypeptide. Requires Ca(2+) as cofactor. Activated by proteolytic processing. In vitro activation is commonly achieved by cleavage with dispase, a neutral bacterial protease. Physiological activation may be catalyzed by CTSL and, to a lesser extent, by CTSS. As to expression, expressed in skin and stomach and, at lower levels, in testis, kidney and spleen (at protein level). On the basis of its catalytic activity, detected in the epidermis, around the granular and spinous layers but not in the outermost cornified layers. In hair follicles, mainly located in the medulla and the hair cortex.

The protein resides in the cytoplasm. It carries out the reaction L-glutaminyl-[protein] + L-lysyl-[protein] = [protein]-L-lysyl-N(6)-5-L-glutamyl-[protein] + NH4(+). Catalyzes the calcium-dependent formation of isopeptide cross-links between glutamine and lysine residues in various proteins, as well as the conjugation of polyamines to proteins. Involved in the formation of the cornified envelope (CE), a specialized component consisting of covalent cross-links of proteins beneath the plasma membrane of terminally differentiated keratinocytes. Catalyzes small proline-rich proteins (SPRR1 and SPRR2) and LOR cross-linking to form small interchain oligomers, which are further cross-linked by TGM1 onto the growing CE scaffold. In hair follicles, involved in cross-linking structural proteins to hardening the inner root sheath. In Mus musculus (Mouse), this protein is Protein-glutamine gamma-glutamyltransferase E (Tgm3).